Consider the following 118-residue polypeptide: Thioredoxin H-type 2 (118 aa).

Residues 2–113 (AEEGQVIGVH…LQQTIAKHIS (112 aa)) form the Thioredoxin domain. Active-site nucleophile residues include cysteine 39 and cysteine 42. Cysteine 39 and cysteine 42 are oxidised to a cystine.

This sequence belongs to the thioredoxin family. Plant H-type subfamily.

It localises to the cytoplasm. Participates in various redox reactions through the reversible oxidation of the active center dithiol to a disulfide. The H form is known to activate a number of cytosolic enzymes. The polypeptide is Thioredoxin H-type 2 (Nicotiana tabacum (Common tobacco)).